Reading from the N-terminus, the 465-residue chain is Sodium-dependent phosphate transport protein 1 (465 aa).

Asn39, Asn47, and Asn56 each carry an N-linked (GlcNAc...) asparagine glycan. Transmembrane regions (helical) follow at residues 79-99 (GLIL…VGYL), 117-137 (SLMS…VIVC), 176-196 (FVMG…LLGW), 199-219 (VFYI…FLFF), 260-280 (LPLW…SLLV), 304-324 (LPYL…DFFL), 337-356 (LFTT…LLYL), 363-383 (TVIF…GQLI), 399-419 (VTAL…GLIL), and 429-449 (KIFF…FLFA).

It belongs to the major facilitator superfamily. Sodium/anion cotransporter family. As to quaternary structure, interacts with PDZK1. In terms of tissue distribution, kidney.

The protein resides in the apical cell membrane. It catalyses the reaction 3 Na(+)(out) + phosphate(out) = 3 Na(+)(in) + phosphate(in). The catalysed reaction is urate(out) = urate(in). In terms of biological role, important for the resorption of phosphate by the kidney. May be involved in actively transporting phosphate into cells via Na(+) cotransport in the renal brush border membrane. Plays a role in urate transport in the kidney. The polypeptide is Sodium-dependent phosphate transport protein 1 (Slc17a1) (Mus musculus (Mouse)).